The chain runs to 199 residues: HTH-type transcriptional regulator BetI (199 aa).

Residues 8 to 68 (EIRKPQLVKA…ETMREILRQL (61 aa)) enclose the HTH tetR-type domain. The segment at residues 31 to 50 (SISLISKEAGVSTGIINHYF) is a DNA-binding region (H-T-H motif).

It functions in the pathway amine and polyamine biosynthesis; betaine biosynthesis via choline pathway [regulation]. In terms of biological role, repressor involved in the biosynthesis of the osmoprotectant glycine betaine. It represses transcription of the choline transporter BetT and the genes of BetAB involved in the synthesis of glycine betaine. The protein is HTH-type transcriptional regulator BetI of Vibrio parahaemolyticus serotype O3:K6 (strain RIMD 2210633).